A 521-amino-acid chain; its full sequence is Bifunctional purine biosynthesis protein PurH (521 aa).

In terms of domain architecture, MGS-like spans 1 to 145 (MIKQALISVS…KNHRDVTVVV (145 aa)).

It belongs to the PurH family.

The enzyme catalyses (6R)-10-formyltetrahydrofolate + 5-amino-1-(5-phospho-beta-D-ribosyl)imidazole-4-carboxamide = 5-formamido-1-(5-phospho-D-ribosyl)imidazole-4-carboxamide + (6S)-5,6,7,8-tetrahydrofolate. The catalysed reaction is IMP + H2O = 5-formamido-1-(5-phospho-D-ribosyl)imidazole-4-carboxamide. The protein operates within purine metabolism; IMP biosynthesis via de novo pathway; 5-formamido-1-(5-phospho-D-ribosyl)imidazole-4-carboxamide from 5-amino-1-(5-phospho-D-ribosyl)imidazole-4-carboxamide (10-formyl THF route): step 1/1. It functions in the pathway purine metabolism; IMP biosynthesis via de novo pathway; IMP from 5-formamido-1-(5-phospho-D-ribosyl)imidazole-4-carboxamide: step 1/1. This Burkholderia cenocepacia (strain HI2424) protein is Bifunctional purine biosynthesis protein PurH.